The primary structure comprises 666 residues: Fructose-1,6-bisphosphatase class 3 (666 aa).

It belongs to the FBPase class 3 family. The cofactor is Mn(2+).

It carries out the reaction beta-D-fructose 1,6-bisphosphate + H2O = beta-D-fructose 6-phosphate + phosphate. It participates in carbohydrate biosynthesis; gluconeogenesis. This Phocaeicola vulgatus (strain ATCC 8482 / DSM 1447 / JCM 5826 / CCUG 4940 / NBRC 14291 / NCTC 11154) (Bacteroides vulgatus) protein is Fructose-1,6-bisphosphatase class 3.